The following is a 205-amino-acid chain: Cytochrome c biogenesis ATP-binding export protein CcmA 2 (205 aa).

An ABC transporter domain is found at 2 to 205 (LEARDLYCER…LALTGGGAGL (204 aa)). ATP is bound at residue 34–41 (GGNGAGKT).

The protein belongs to the ABC transporter superfamily. CcmA exporter (TC 3.A.1.107) family. As to quaternary structure, the complex is composed of two ATP-binding proteins (CcmA) and two transmembrane proteins (CcmB).

Its subcellular location is the cell inner membrane. It carries out the reaction heme b(in) + ATP + H2O = heme b(out) + ADP + phosphate + H(+). In terms of biological role, part of the ABC transporter complex CcmAB involved in the biogenesis of c-type cytochromes; once thought to export heme, this seems not to be the case, but its exact role is uncertain. Responsible for energy coupling to the transport system. The polypeptide is Cytochrome c biogenesis ATP-binding export protein CcmA 2 (Salmonella typhimurium (strain LT2 / SGSC1412 / ATCC 700720)).